Reading from the N-terminus, the 202-residue chain is Glycerol-3-phosphate acyltransferase (202 aa).

Helical transmembrane passes span 2–22 (MIIV…GFVI), 54–74 (FLVT…PLWL), 85–105 (FFTN…YPVY), 120–140 (VVLG…FIVL), 141–161 (KIFK…VIGS), and 162–182 (LIIQ…ILII).

It belongs to the PlsY family. In terms of assembly, probably interacts with PlsX.

Its subcellular location is the cell membrane. The catalysed reaction is an acyl phosphate + sn-glycerol 3-phosphate = a 1-acyl-sn-glycero-3-phosphate + phosphate. Its pathway is lipid metabolism; phospholipid metabolism. In terms of biological role, catalyzes the transfer of an acyl group from acyl-phosphate (acyl-PO(4)) to glycerol-3-phosphate (G3P) to form lysophosphatidic acid (LPA). This enzyme utilizes acyl-phosphate as fatty acyl donor, but not acyl-CoA or acyl-ACP. The chain is Glycerol-3-phosphate acyltransferase from Staphylococcus aureus (strain Mu3 / ATCC 700698).